The primary structure comprises 183 residues: ATP-dependent protease subunit HslV (183 aa).

The active site involves threonine 12. Alanine 166, cysteine 169, and threonine 172 together coordinate Na(+).

Belongs to the peptidase T1B family. HslV subfamily. In terms of assembly, a double ring-shaped homohexamer of HslV is capped on each side by a ring-shaped HslU homohexamer. The assembly of the HslU/HslV complex is dependent on binding of ATP.

The protein resides in the cytoplasm. It carries out the reaction ATP-dependent cleavage of peptide bonds with broad specificity.. Allosterically activated by HslU binding. In terms of biological role, protease subunit of a proteasome-like degradation complex believed to be a general protein degrading machinery. The chain is ATP-dependent protease subunit HslV from Afipia carboxidovorans (strain ATCC 49405 / DSM 1227 / KCTC 32145 / OM5) (Oligotropha carboxidovorans).